The following is a 212-amino-acid chain: HTH-type transcriptional repressor NicS (212 aa).

Positions 14-74 constitute an HTH tetR-type domain; that stretch reads DRTRDNILKA…SVLEHIYASF (61 aa). The H-T-H motif DNA-binding region spans 37-56; that stretch reads RIEQISTLAKSNDRMIYYYF.

It functions in the pathway cofactor degradation; nicotinate degradation [regulation]. Functionally, transcriptional repressor for the nicAB operon, encoding the upper aerobic nicotinate degradation pathway. Acts under non-induced conditions: repression of the nicAB operon becomes alleviated in presence of either nicotinate or 6-hydroxynicotinate (6HNA). This Pseudomonas putida (strain ATCC 47054 / DSM 6125 / CFBP 8728 / NCIMB 11950 / KT2440) protein is HTH-type transcriptional repressor NicS (nicS).